The primary structure comprises 66 residues: Cold shock protein CspC (66 aa).

One can recognise a CSD domain in the interval 4–63 (GTVKWFNAEKGFGFIERENGDDVFVHFSAIQSDGFKSLDEGQKVSFDVEQGARGAQAANV).

It is found in the cytoplasm. The polypeptide is Cold shock protein CspC (cspC) (Bacillus subtilis (strain 168)).